The primary structure comprises 345 residues: Dimethyladenosine transferase 1, mitochondrial (345 aa).

A mitochondrion-targeting transit peptide spans 1–27 (MAASGKLGTFRLPPLPTIREIIKLFGL). The S-adenosyl-L-methionine site is built by leucine 38, glycine 63, glutamate 85, lysine 86, aspartate 111, valine 112, and asparagine 141.

This sequence belongs to the class I-like SAM-binding methyltransferase superfamily. rRNA adenine N(6)-methyltransferase family. KsgA subfamily. Interacts with mitochondrial RNA polymerase POLRMT. Interacts with TFAM. Remains bound to the maturing mtSSU until the late stages of assembly. In terms of tissue distribution, ubiquitously expressed.

It localises to the mitochondrion. It catalyses the reaction adenosine(N)/adenosine(N+1) in rRNA + 4 S-adenosyl-L-methionine = N(6)-dimethyladenosine(N)/N(6)-dimethyladenosine(N+1) in rRNA + 4 S-adenosyl-L-homocysteine + 4 H(+). Mitochondrial methyltransferase which uses S-adenosyl methionine to dimethylate two highly conserved adjacent adenosine residues (A1006 and A1007) within the loop of helix 45 at the 3-prime end of 12S rRNA, thereby regulating the assembly or stability of the small subunit of the mitochondrial ribosome. Also required for basal transcription of mitochondrial DNA, probably via its interaction with POLRMT and TFAM. Stimulates transcription independently of the methyltransferase activity. The polypeptide is Dimethyladenosine transferase 1, mitochondrial (Tfb1m) (Mus musculus (Mouse)).